A 228-amino-acid chain; its full sequence is Urease accessory protein UreF 1 (228 aa).

Belongs to the UreF family. As to quaternary structure, ureD, UreF and UreG form a complex that acts as a GTP-hydrolysis-dependent molecular chaperone, activating the urease apoprotein by helping to assemble the nickel containing metallocenter of UreC. The UreE protein probably delivers the nickel.

The protein resides in the cytoplasm. Its function is as follows. Required for maturation of urease via the functional incorporation of the urease nickel metallocenter. The sequence is that of Urease accessory protein UreF 1 from Brucella anthropi (strain ATCC 49188 / DSM 6882 / CCUG 24695 / JCM 21032 / LMG 3331 / NBRC 15819 / NCTC 12168 / Alc 37) (Ochrobactrum anthropi).